The following is a 72-amino-acid chain: UPF0270 protein KPK_0377 (72 aa).

Belongs to the UPF0270 family.

In Klebsiella pneumoniae (strain 342), this protein is UPF0270 protein KPK_0377.